A 409-amino-acid polypeptide reads, in one-letter code: Peptidase T (409 aa).

A Zn(2+)-binding site is contributed by His-78. Residue Asp-80 is part of the active site. Asp-140 is a binding site for Zn(2+). Residue Glu-173 is the Proton acceptor of the active site. Residues Glu-174, Asp-196, and His-379 each contribute to the Zn(2+) site.

The protein belongs to the peptidase M20B family. Requires Zn(2+) as cofactor.

The protein resides in the cytoplasm. The enzyme catalyses Release of the N-terminal residue from a tripeptide.. Its function is as follows. Cleaves the N-terminal amino acid of tripeptides. This chain is Peptidase T, found in Salmonella dublin (strain CT_02021853).